Consider the following 181-residue polypeptide: Ferritin BfrB (181 aa).

In terms of domain architecture, Ferritin-like diiron spans 15–150; that stretch reads MQEQIHNEFT…TLVRVADRAG (136 aa). Residues E22, E55, H58, E99, and Q132 each coordinate Fe cation.

The protein belongs to the ferritin family. Prokaryotic subfamily. As to quaternary structure, homooligomer of 24 subunits that are packed together to form an approximately spherical molecule with a central cavity, in which large amounts of iron can be stored.

It carries out the reaction 4 Fe(2+) + O2 + 4 H(+) = 4 Fe(3+) + 2 H2O. Functionally, iron-storage protein that displays ferroxidase activity, catalyzing the oxidation of Fe(2+) ions into Fe(3+) ions, that can then be deposited as a ferric-oxide mineral core within the central cavity of the protein complex. The polypeptide is Ferritin BfrB (bfrB) (Mycobacterium tuberculosis (strain ATCC 35801 / TMC 107 / Erdman)).